The chain runs to 202 residues: MPPNLQRIFPALCLLGVLFLLHCTPVLCGCDNPPVVAHGHHTQIIGLFGMKKDEVVYKCDEGYTLVGEDRLSCRSSRWSPAAPQCKALCPKPQIDRGKLSVDQDEYIESENVIVQCGSGYGLVGPKIITCTEDGTWHPRVPKCEWEYPEDCEQVHEGKKLMQCLPNLEEIKLALELYKLSLETKLLELQIDKEKKAKAKYSI.

Positions 1-28 are cleaved as a signal peptide; that stretch reads MPPNLQRIFPALCLLGVLFLLHCTPVLC. Sushi domains follow at residues 29–87 and 88–145; these read GCDN…QCKA and LCPK…KCEW. Disulfide bonds link Cys-30/Cys-73, Cys-59/Cys-85, Cys-89/Cys-130, and Cys-116/Cys-143.

In terms of assembly, forms high molecular weight disulfide-linked complexes. In terms of tissue distribution, plasma. Found on very low-density lipoprotein (VLDL), on chylomicrons, and in the D &gt; 1.21 g/ml fraction of pig plasma. Found in liver, spleen, lung, bone marrow and lymph node.

It is found in the secreted. Its function is as follows. May be a lipoprotein-borne regulator of either the coagulation or the complement cascades. This Sus scrofa (Pig) protein is Apolipoprotein R (APOR).